A 182-amino-acid polypeptide reads, in one-letter code: ATP synthase subunit delta (182 aa).

This sequence belongs to the ATPase delta chain family. As to quaternary structure, F-type ATPases have 2 components, F(1) - the catalytic core - and F(0) - the membrane proton channel. F(1) has five subunits: alpha(3), beta(3), gamma(1), delta(1), epsilon(1). CF(0) has four main subunits: a(1), b(1), b'(1) and c(10-14). The alpha and beta chains form an alternating ring which encloses part of the gamma chain. F(1) is attached to F(0) by a central stalk formed by the gamma and epsilon chains, while a peripheral stalk is formed by the delta, b and b' chains.

The protein localises to the cellular thylakoid membrane. F(1)F(0) ATP synthase produces ATP from ADP in the presence of a proton or sodium gradient. F-type ATPases consist of two structural domains, F(1) containing the extramembraneous catalytic core and F(0) containing the membrane proton channel, linked together by a central stalk and a peripheral stalk. During catalysis, ATP synthesis in the catalytic domain of F(1) is coupled via a rotary mechanism of the central stalk subunits to proton translocation. In terms of biological role, this protein is part of the stalk that links CF(0) to CF(1). It either transmits conformational changes from CF(0) to CF(1) or is implicated in proton conduction. The sequence is that of ATP synthase subunit delta from Microcystis aeruginosa (strain NIES-843 / IAM M-2473).